The chain runs to 326 residues: Eukaryotic translation initiation factor 3 subunit I (326 aa).

5 WD repeats span residues G8–T47, G50–S89, M145–D184, D188–T227, and G285–E326.

Belongs to the eIF-3 subunit I family. In terms of assembly, component of the eukaryotic translation initiation factor 3 (eIF-3) complex. The eIF-3 complex interacts with pix.

The protein localises to the cytoplasm. Its function is as follows. Component of the eukaryotic translation initiation factor 3 (eIF-3) complex, which is involved in protein synthesis of a specialized repertoire of mRNAs and, together with other initiation factors, stimulates binding of mRNA and methionyl-tRNAi to the 40S ribosome. The eIF-3 complex specifically targets and initiates translation of a subset of mRNAs involved in cell proliferation. The chain is Eukaryotic translation initiation factor 3 subunit I from Drosophila erecta (Fruit fly).